A 493-amino-acid polypeptide reads, in one-letter code: Probable cytochrome P450 6a13 (493 aa).

Cys-435 provides a ligand contact to heme.

The protein belongs to the cytochrome P450 family. Heme is required as a cofactor.

Its subcellular location is the endoplasmic reticulum membrane. The protein resides in the microsome membrane. Functionally, may be involved in the metabolism of insect hormones and in the breakdown of synthetic insecticides. This chain is Probable cytochrome P450 6a13 (Cyp6a13), found in Drosophila melanogaster (Fruit fly).